The sequence spans 643 residues: Clathrin interactor 1 (643 aa).

The region spanning 16 to 149 (NVVMNYSEIE…QDDDRLREER (134 aa)) is the ENTH domain. Residue Arg29 coordinates a 1,2-diacyl-sn-glycero-3-phospho-(1D-myo-inositol-4,5-bisphosphate). The segment at 52 to 54 (FMY) is interaction with VTI1B. A 1,2-diacyl-sn-glycero-3-phospho-(1D-myo-inositol-4,5-bisphosphate) is bound at residue Arg67. Interaction with VTI1B regions lie at residues 94–96 (SER) and 142–153 (DDRLREERKKAK). A phosphoserine mark is found at Ser163, Ser166, Ser173, Ser205, Ser210, Ser227, Ser245, and Ser299. Positions 219 to 331 (FRRKDREDSP…SSGDLVDLFD (113 aa)) are disordered. Basic and acidic residues predominate over residues 222–239 (KDREDSPERCSDSDEEKK). The span at 300–310 (PDQNASTHTPQ) shows a compositional bias: polar residues. The residue at position 308 (Thr308) is a Phosphothreonine. Residues 311–323 (SSLKTSVPSSKSS) show a composition bias toward low complexity. Ser312 and Ser642 each carry phosphoserine.

Belongs to the epsin family. In terms of assembly, binds clathrin heavy chain and AP-2. Interacts with VTI1B. Interacts with GGA2 (via GAE domain). Interacts with AP1G1 (via GAE domain). Interacts with AP1G2 (via GAE domain).

It localises to the cytoplasm. The protein resides in the perinuclear region. Its subcellular location is the membrane. It is found in the cytoplasmic vesicle. The protein localises to the clathrin-coated vesicle. Functionally, binds to membranes enriched in phosphatidylinositol 4,5-bisphosphate (PtdIns(4,5)P2). May have a role in transport via clathrin-coated vesicles from the trans-Golgi network to endosomes. Stimulates clathrin assembly. The polypeptide is Clathrin interactor 1 (CLINT1) (Bos taurus (Bovine)).